Consider the following 489-residue polypeptide: Membrane-bound lytic murein transglycosylase F (489 aa).

Positions 1–32 (MFALTAYRLRCAAWLLATGIFLLLAGCSEAKA) are cleaved as a signal peptide. The non-LT domain stretch occupies residues 33 to 268 (PTALERVQKE…RLKDRYYGHV (236 aa)). Residues 269–489 (DVLGYVGAYT…PEEDSGDEKL (221 aa)) form an LT domain region. The active site involves E315. Positions 466–489 (AESGLHLPGVNKTRPEEDSGDEKL) are disordered. Residues 478–489 (TRPEEDSGDEKL) show a composition bias toward basic and acidic residues.

The protein in the N-terminal section; belongs to the bacterial solute-binding protein 3 family. It in the C-terminal section; belongs to the transglycosylase Slt family.

The protein resides in the cell outer membrane. The enzyme catalyses Exolytic cleavage of the (1-&gt;4)-beta-glycosidic linkage between N-acetylmuramic acid (MurNAc) and N-acetylglucosamine (GlcNAc) residues in peptidoglycan, from either the reducing or the non-reducing ends of the peptidoglycan chains, with concomitant formation of a 1,6-anhydrobond in the MurNAc residue.. Functionally, murein-degrading enzyme that degrades murein glycan strands and insoluble, high-molecular weight murein sacculi, with the concomitant formation of a 1,6-anhydromuramoyl product. Lytic transglycosylases (LTs) play an integral role in the metabolism of the peptidoglycan (PG) sacculus. Their lytic action creates space within the PG sacculus to allow for its expansion as well as for the insertion of various structures such as secretion systems and flagella. The polypeptide is Membrane-bound lytic murein transglycosylase F (Pseudomonas aeruginosa (strain UCBPP-PA14)).